A 433-amino-acid polypeptide reads, in one-letter code: Protein arginine N-methyltransferase 2 (433 aa).

The segment at 1 to 27 is disordered; sequence MSTSGCSSEKSDFQDSTEGEEEEDTQS. Residues 15 to 26 are compositionally biased toward acidic residues; sequence DSTEGEEEEDTQ. Residues 30–89 form the SH3 domain; it reads LCMREYVVIRDYMAADATQLSLCFGDKVLLLSAVTQDWWWVKHNGICGYVPASYLHDALN. An SAM-dependent MTase PRMT-type domain is found at 102–416; it reads DEEYYGSYKT…MSVTLSWVIN (315 aa). Positions 115, 124, 148, 171, and 200 each coordinate S-adenosyl-L-methionine. Residues E214 and E223 contribute to the active site.

It belongs to the class I-like SAM-binding methyltransferase superfamily. Protein arginine N-methyltransferase family. Interacts with ctnnb1.

The protein localises to the cytoplasm. The protein resides in the nucleus. The enzyme catalyses L-arginyl-[protein] + 2 S-adenosyl-L-methionine = N(omega),N(omega)-dimethyl-L-arginyl-[protein] + 2 S-adenosyl-L-homocysteine + 2 H(+). Its function is as follows. Arginine methyltransferase that methylates the guanidino nitrogens of arginyl residues in proteins such as histones. Involved in growth regulation. Involved in embryonic dorsal development. This is Protein arginine N-methyltransferase 2 (prmt2) from Xenopus tropicalis (Western clawed frog).